Reading from the N-terminus, the 887-residue chain is Microsomal triglyceride transfer protein large subunit (887 aa).

The N-terminal stretch at 1–11 is a signal peptide; sequence FLCFISSYSAS. The region spanning 21–655 is the Vitellogenin domain; sequence LNNDRLYKLT…YIEKTPLHGI (635 aa). Cysteine 167 and cysteine 187 are disulfide-bonded.

In terms of assembly, heterodimer; heterodimerizes with the protein disulfide isomerase (P4HB/PDI). Interacts with APOB. Interacts with PRAP1.

The protein resides in the endoplasmic reticulum. It is found in the golgi apparatus. The catalysed reaction is a 1,2-diacyl-sn-glycero-3-phosphocholine(in) = a 1,2-diacyl-sn-glycero-3-phosphocholine(out). It carries out the reaction a 1,2-diacyl-sn-glycero-3-phosphoethanolamine(in) = a 1,2-diacyl-sn-glycero-3-phosphoethanolamine(out). The enzyme catalyses a cholesterol ester(in) = a cholesterol ester(out). It catalyses the reaction a triacyl-sn-glycerol(in) = a triacyl-sn-glycerol(out). Functionally, catalyzes the transport of triglyceride, cholesteryl ester, and phospholipid between phospholipid surfaces. Required for the assembly and secretion of plasma lipoproteins that contain apolipoprotein B. May be involved in regulating cholesteryl ester biosynthesis in cells that produce lipoproteins. The polypeptide is Microsomal triglyceride transfer protein large subunit (MTTP) (Bos taurus (Bovine)).